The primary structure comprises 228 residues: 7-cyano-7-deazaguanine synthase (228 aa).

9–19 (YSGGLDSTTCM) serves as a coordination point for ATP. 4 residues coordinate Zn(2+): Cys189, Cys199, Cys202, and Cys205.

Belongs to the QueC family. Requires Zn(2+) as cofactor.

It carries out the reaction 7-carboxy-7-deazaguanine + NH4(+) + ATP = 7-cyano-7-deazaguanine + ADP + phosphate + H2O + H(+). It functions in the pathway purine metabolism; 7-cyano-7-deazaguanine biosynthesis. Its function is as follows. Catalyzes the ATP-dependent conversion of 7-carboxy-7-deazaguanine (CDG) to 7-cyano-7-deazaguanine (preQ(0)). This Geotalea uraniireducens (strain Rf4) (Geobacter uraniireducens) protein is 7-cyano-7-deazaguanine synthase.